The chain runs to 704 residues: Non-sulfated chondroitin lyase E66 (704 aa).

Positions 1-23 (MSIVLIIVIVVIFLICFLYLSNS) are cleaved as a signal peptide. Residues N236 and H291 each act as proton acceptor in the active site. Y299 serves as the catalytic Proton donor.

Belongs to the baculoviridae E66 family.

The protein resides in the virion membrane. It localises to the host nucleus. The protein localises to the host cytoplasm. In terms of biological role, component of the polyhedra envelope. Plays an essential role in oral infectivity. May digest, with its chondroitin lyase activity, the chondroitin sulfate barrier of the peritrophic matrix of the host midgut to facilitate viral infection in the epithelial cells. This is Non-sulfated chondroitin lyase E66 (P79) from Lepidoptera (butterflies and moths).